We begin with the raw amino-acid sequence, 261 residues long: Small ribosomal subunit protein eS1 (261 aa).

Over residues 1-18 the composition is skewed to basic residues; sequence MAVGKNKRISKGKKGGKK. The interval 1–23 is disordered; sequence MAVGKNKRISKGKKGGKKKAADP.

It belongs to the eukaryotic ribosomal protein eS1 family. Component of the small ribosomal subunit. Mature ribosomes consist of a small (40S) and a large (60S) subunit. The 40S subunit contains about 33 different proteins and 1 molecule of RNA (18S). The 60S subunit contains about 49 different proteins and 3 molecules of RNA (25S, 5.8S and 5S).

The protein localises to the cytoplasm. This chain is Small ribosomal subunit protein eS1 (cyc07), found in Nicotiana tabacum (Common tobacco).